The primary structure comprises 251 residues: Hydroxyacylglutathione hydrolase (251 aa).

Zn(2+)-binding residues include histidine 53, histidine 55, aspartate 57, histidine 58, histidine 110, aspartate 127, and histidine 165.

Belongs to the metallo-beta-lactamase superfamily. Glyoxalase II family. In terms of assembly, monomer. The cofactor is Zn(2+).

The enzyme catalyses an S-(2-hydroxyacyl)glutathione + H2O = a 2-hydroxy carboxylate + glutathione + H(+). The protein operates within secondary metabolite metabolism; methylglyoxal degradation; (R)-lactate from methylglyoxal: step 2/2. Its function is as follows. Thiolesterase that catalyzes the hydrolysis of S-D-lactoyl-glutathione to form glutathione and D-lactic acid. This Salmonella agona (strain SL483) protein is Hydroxyacylglutathione hydrolase.